The primary structure comprises 220 residues: Fructose-6-phosphate aldolase 1 (220 aa).

K85 acts as the Schiff-base intermediate with substrate in catalysis.

The protein belongs to the transaldolase family. Type 3A subfamily. In terms of assembly, homodecamer. Five subunits are arranged as a pentamer, and two ring-like pentamers pack like a donut to form the decamer.

It localises to the cytoplasm. It carries out the reaction beta-D-fructose 6-phosphate = dihydroxyacetone + D-glyceraldehyde 3-phosphate. Its activity is regulated as follows. Inhibited by glycerol, inorganic phosphate and arabinose 5-phosphate. Its function is as follows. Catalyzes the reversible formation of fructose 6-phosphate from dihydroxyacetone (DHA) and D-glyceraldehyde 3-phosphate via an aldolization reaction. Can utilize several aldehydes as acceptor compounds in vitro, and hydroxyacetone (HA) or 1-hydroxy-butan-2-one as alternative donor substrate. Is also able to catalyze the direct stereoselective self-aldol addition of glycolaldehyde to furnish D-(-)-threose, and cross-aldol reactions of glycolaldehyde to other aldehyde acceptors. Is not able to cleave fructose, fructose 1-phosphate, glucose 6-phosphate, sedoheptulose 1,7-bisphosphate, xylulose 5-phosphate, ribulose 5-phosphate, and fructose 1,6-bisphosphate; cannot use dihydroxyacetone phosphate as donor compound nor D-glyceraldehyde as acceptor. Does not display transaldolase activity. The protein is Fructose-6-phosphate aldolase 1 (fsaA) of Escherichia coli (strain K12).